Reading from the N-terminus, the 186-residue chain is Ribosome maturation factor RimP (186 aa).

This sequence belongs to the RimP family.

Its subcellular location is the cytoplasm. Its function is as follows. Required for maturation of 30S ribosomal subunits. This chain is Ribosome maturation factor RimP, found in Rhizorhabdus wittichii (strain DSM 6014 / CCUG 31198 / JCM 15750 / NBRC 105917 / EY 4224 / RW1) (Sphingomonas wittichii).